The following is a 317-amino-acid chain: MNLTFLDFEQPIADLESKINSLVELSQRDKTLNINKEINCLRKKSEDLTKKIFSNLNAWQITKIARHPMRPYALDYIKNIFTDFDELSGDRLYGDDKSIIGGIARLNSRPVMILGHQKGRETKEKIFRNFGMPTPEGYRKALRLMKIADRFNMPLITLIDTPGAYPGIEAEERGQASAIATNLREMSMLKIPIICTVIGEGGSGGALAIGVGDKINMMQYSIYSVISPEGCAAILWKNVDKAPIAAEEMGIIATRLKELNLIDNIIPEPLGGAHRNIKIITSNLKNRILKDLKELDKFTTSDLLNNRYKKLMSYGYN.

The region spanning asparagine 33–glutamate 294 is the CoA carboxyltransferase C-terminal domain.

It belongs to the AccA family. As to quaternary structure, acetyl-CoA carboxylase is a heterohexamer composed of biotin carboxyl carrier protein (AccB), biotin carboxylase (AccC) and two subunits each of ACCase subunit alpha (AccA) and ACCase subunit beta (AccD).

The protein resides in the cytoplasm. It catalyses the reaction N(6)-carboxybiotinyl-L-lysyl-[protein] + acetyl-CoA = N(6)-biotinyl-L-lysyl-[protein] + malonyl-CoA. Its pathway is lipid metabolism; malonyl-CoA biosynthesis; malonyl-CoA from acetyl-CoA: step 1/1. Its function is as follows. Component of the acetyl coenzyme A carboxylase (ACC) complex. First, biotin carboxylase catalyzes the carboxylation of biotin on its carrier protein (BCCP) and then the CO(2) group is transferred by the carboxyltransferase to acetyl-CoA to form malonyl-CoA. The chain is Acetyl-coenzyme A carboxylase carboxyl transferase subunit alpha from Wigglesworthia glossinidia brevipalpis.